Reading from the N-terminus, the 174-residue chain is NADPH-dependent 7-cyano-7-deazaguanine reductase (174 aa).

C72 (thioimide intermediate) is an active-site residue. The active-site Proton donor is the D79. Substrate-binding positions include 94 to 96 and 113 to 114; these read VES and HE.

The protein belongs to the GTP cyclohydrolase I family. QueF type 1 subfamily.

It localises to the cytoplasm. It catalyses the reaction 7-aminomethyl-7-carbaguanine + 2 NADP(+) = 7-cyano-7-deazaguanine + 2 NADPH + 3 H(+). It participates in tRNA modification; tRNA-queuosine biosynthesis. Catalyzes the NADPH-dependent reduction of 7-cyano-7-deazaguanine (preQ0) to 7-aminomethyl-7-deazaguanine (preQ1). This Synechococcus elongatus (strain ATCC 33912 / PCC 7942 / FACHB-805) (Anacystis nidulans R2) protein is NADPH-dependent 7-cyano-7-deazaguanine reductase.